The primary structure comprises 366 residues: Peptide chain release factor 2 (366 aa).

At Gln-251 the chain carries N5-methylglutamine.

It belongs to the prokaryotic/mitochondrial release factor family. Post-translationally, methylated by PrmC. Methylation increases the termination efficiency of RF2.

It localises to the cytoplasm. Functionally, peptide chain release factor 2 directs the termination of translation in response to the peptide chain termination codons UGA and UAA. This chain is Peptide chain release factor 2 (prfB), found in Bacillus subtilis (strain 168).